The sequence spans 360 residues: Peptide chain release factor 1 (360 aa).

Gln235 bears the N5-methylglutamine mark. Basic and acidic residues predominate over residues 285-295; that stretch reads RQAAEQADTRR. The disordered stretch occupies residues 285 to 309; that stretch reads RQAAEQADTRRNLLGSGDRSDKIRT.

It belongs to the prokaryotic/mitochondrial release factor family. Methylated by PrmC. Methylation increases the termination efficiency of RF1.

The protein resides in the cytoplasm. Functionally, peptide chain release factor 1 directs the termination of translation in response to the peptide chain termination codons UAG and UAA. The protein is Peptide chain release factor 1 of Actinobacillus pleuropneumoniae serotype 7 (strain AP76).